The following is a 464-amino-acid chain: Argininosuccinate lyase (464 aa).

This sequence belongs to the lyase 1 family. Argininosuccinate lyase subfamily.

The protein resides in the cytoplasm. The enzyme catalyses 2-(N(omega)-L-arginino)succinate = fumarate + L-arginine. It functions in the pathway amino-acid biosynthesis; L-arginine biosynthesis; L-arginine from L-ornithine and carbamoyl phosphate: step 3/3. The chain is Argininosuccinate lyase from Crocosphaera subtropica (strain ATCC 51142 / BH68) (Cyanothece sp. (strain ATCC 51142)).